The chain runs to 215 residues: Cytochrome c biogenesis ATP-binding export protein CcmA (215 aa).

The region spanning 8–215 is the ABC transporter domain; it reads LQATALACER…RDLDLGQWSA (208 aa). 40–47 contributes to the ATP binding site; it reads GPNGCGKT.

Belongs to the ABC transporter superfamily. CcmA exporter (TC 3.A.1.107) family. The complex is composed of two ATP-binding proteins (CcmA) and two transmembrane proteins (CcmB).

Its subcellular location is the cell inner membrane. It catalyses the reaction heme b(in) + ATP + H2O = heme b(out) + ADP + phosphate + H(+). Functionally, part of the ABC transporter complex CcmAB involved in the biogenesis of c-type cytochromes; once thought to export heme, this seems not to be the case, but its exact role is uncertain. Responsible for energy coupling to the transport system. In Pseudomonas syringae pv. syringae (strain B728a), this protein is Cytochrome c biogenesis ATP-binding export protein CcmA.